Here is a 430-residue protein sequence, read N- to C-terminus: tRNA(Ile)-lysidine synthase (430 aa).

21–26 (SGGLDS) serves as a coordination point for ATP.

Belongs to the tRNA(Ile)-lysidine synthase family.

The protein localises to the cytoplasm. The catalysed reaction is cytidine(34) in tRNA(Ile2) + L-lysine + ATP = lysidine(34) in tRNA(Ile2) + AMP + diphosphate + H(+). In terms of biological role, ligates lysine onto the cytidine present at position 34 of the AUA codon-specific tRNA(Ile) that contains the anticodon CAU, in an ATP-dependent manner. Cytidine is converted to lysidine, thus changing the amino acid specificity of the tRNA from methionine to isoleucine. This is tRNA(Ile)-lysidine synthase from Salmonella typhimurium (strain LT2 / SGSC1412 / ATCC 700720).